The chain runs to 57 residues: Weak toxin CM-1b (57 aa).

4 disulfides stabilise this stretch: C3–C19, C12–C37, C40–C49, and C50–C55.

Belongs to the three-finger toxin family. Short-chain subfamily. Orphan group XX sub-subfamily. Expressed by the venom gland.

The protein resides in the secreted. In Hemachatus haemachatus (Rinkhals), this protein is Weak toxin CM-1b.